Reading from the N-terminus, the 350-residue chain is Guanine nucleotide-binding protein G(t) subunit alpha (350 aa).

A disordered region spans residues 1 to 21 (MGAGASAEEKHSRELEKKLKE). G2 carries the N-myristoyl glycine lipid modification. Basic and acidic residues predominate over residues 7-21 (AEEKHSRELEKKLKE). One can recognise a G-alpha domain in the interval 28-350 (RTVKLLLLGA…KENLKDCGLF (323 aa)). Positions 31–44 (KLLLLGAGESGKST) are G1 motif. GTP-binding positions include 36 to 43 (GAGESGKS), 171 to 177 (LRSRVKT), 196 to 200 (DVGGQ), 265 to 268 (NKKD), and A322. Mg(2+)-binding residues include S43 and T177. Positions 169 to 177 (DVLRSRVKT) are G2 motif. Residues 192 to 201 (FRMFDVGGQR) are G3 motif. Positions 261-268 (VLFLNKKD) are G4 motif. Residues 320-325 (TCATDT) are G5 motif.

This sequence belongs to the G-alpha family. G(i/o/t/z) subfamily. G proteins are composed of 3 units; alpha, beta and gamma. The alpha chain contains the guanine nucleotide binding site.

In terms of biological role, guanine nucleotide-binding proteins (G proteins) are involved as modulators or transducers in various transmembrane signaling systems. Transducin is an amplifier and one of the transducers of a visual impulse that performs the coupling between rhodopsin and cGMP-phosphodiesterase. This chain is Guanine nucleotide-binding protein G(t) subunit alpha (gnat), found in Xenopus laevis (African clawed frog).